The following is a 209-amino-acid chain: Ribonuclease HII (209 aa).

One can recognise an RNase H type-2 domain in the interval 20-209 (GLVAGVDEAG…VARSLPGACR (190 aa)). A divalent metal cation-binding residues include D26, E27, and D118.

This sequence belongs to the RNase HII family. Requires Mn(2+) as cofactor. The cofactor is Mg(2+).

It is found in the cytoplasm. It catalyses the reaction Endonucleolytic cleavage to 5'-phosphomonoester.. Its function is as follows. Endonuclease that specifically degrades the RNA of RNA-DNA hybrids. This Verminephrobacter eiseniae (strain EF01-2) protein is Ribonuclease HII.